Here is a 426-residue protein sequence, read N- to C-terminus: Mitochondrial distribution and morphology protein 12 (426 aa).

The SMP-LTD domain maps to 1-426 (MSIEVDWKTA…VFPSFWTFLI (426 aa)). Disordered stretches follow at residues 88–147 (AHGN…GTPG), 185–264 (WTDH…FRFP), and 346–370 (ADDQ…SPKR). The span at 96–109 (THSELNEPPYRDEV) shows a compositional bias: basic and acidic residues. The span at 216-236 (SSNPTSRPSTSSTLPSHPSGS) shows a compositional bias: low complexity. Composition is skewed to basic and acidic residues over residues 244-264 (SHPE…FRFP) and 349-360 (QETRDKDDHPRS).

This sequence belongs to the MDM12 family. As to quaternary structure, component of the ER-mitochondria encounter structure (ERMES) or MDM complex, composed of mmm1, mdm10, mdm12 and mdm34. A mmm1 homodimer associates with one molecule of mdm12 on each side in a pairwise head-to-tail manner, and the SMP-LTD domains of mmm1 and mdm12 generate a continuous hydrophobic tunnel for phospholipid trafficking.

It is found in the mitochondrion outer membrane. It localises to the endoplasmic reticulum membrane. Functionally, component of the ERMES/MDM complex, which serves as a molecular tether to connect the endoplasmic reticulum (ER) and mitochondria. Components of this complex are involved in the control of mitochondrial shape and protein biogenesis, and function in nonvesicular lipid trafficking between the ER and mitochondria. Mdm12 is required for the interaction of the ER-resident membrane protein mmm1 and the outer mitochondrial membrane-resident beta-barrel protein mdm10. The mdm12-mmm1 subcomplex functions in the major beta-barrel assembly pathway that is responsible for biogenesis of all mitochondrial outer membrane beta-barrel proteins, and acts in a late step after the SAM complex. The mdm10-mdm12-mmm1 subcomplex further acts in the TOM40-specific pathway after the action of the mdm12-mmm1 complex. Essential for establishing and maintaining the structure of mitochondria and maintenance of mtDNA nucleoids. In Aspergillus terreus (strain NIH 2624 / FGSC A1156), this protein is Mitochondrial distribution and morphology protein 12.